Consider the following 661-residue polypeptide: UvrABC system protein B (661 aa).

The region spanning 23-180 (EGLQKGYRIQ…THLARIGYER (158 aa)) is the Helicase ATP-binding domain. 36–43 (GVTGSGKT) lines the ATP pocket. The short motif at 89–112 (YYDYYQPEAYIPTRDLYIEKNADI) is the Beta-hairpin element. In terms of domain architecture, Helicase C-terminal spans 426–592 (QIDDLVNEIA…TIIKPLDEEI (167 aa)). The UVR domain occupies 620 to 655 (EEYIALLEEEMYKAASELRYEDAARLRDELFNIREK).

This sequence belongs to the UvrB family. Forms a heterotetramer with UvrA during the search for lesions. Interacts with UvrC in an incision complex.

It localises to the cytoplasm. Functionally, the UvrABC repair system catalyzes the recognition and processing of DNA lesions. A damage recognition complex composed of 2 UvrA and 2 UvrB subunits scans DNA for abnormalities. Upon binding of the UvrA(2)B(2) complex to a putative damaged site, the DNA wraps around one UvrB monomer. DNA wrap is dependent on ATP binding by UvrB and probably causes local melting of the DNA helix, facilitating insertion of UvrB beta-hairpin between the DNA strands. Then UvrB probes one DNA strand for the presence of a lesion. If a lesion is found the UvrA subunits dissociate and the UvrB-DNA preincision complex is formed. This complex is subsequently bound by UvrC and the second UvrB is released. If no lesion is found, the DNA wraps around the other UvrB subunit that will check the other stand for damage. This chain is UvrABC system protein B, found in Thermosipho africanus (strain TCF52B).